Reading from the N-terminus, the 353-residue chain is D-alanine--D-alanine ligase (353 aa).

The ATP-grasp domain occupies 141-349 (KAAFAAAGLS…LPQLVAELVD (209 aa)). Position 176–231 (176–231 (EQELGYPCFVKPANLGSSVGITKANNRDELLAGLHQAAALDPRLLVEQGVNARELE)) interacts with ATP. Residues Asp-302, Glu-316, and Asn-318 each coordinate Mg(2+).

It belongs to the D-alanine--D-alanine ligase family. Mg(2+) is required as a cofactor. The cofactor is Mn(2+).

It localises to the cytoplasm. The enzyme catalyses 2 D-alanine + ATP = D-alanyl-D-alanine + ADP + phosphate + H(+). Its pathway is cell wall biogenesis; peptidoglycan biosynthesis. Cell wall formation. This chain is D-alanine--D-alanine ligase, found in Synechococcus sp. (strain WH7803).